The primary structure comprises 130 residues: Small ribosomal subunit protein uS8 (130 aa).

The protein belongs to the universal ribosomal protein uS8 family. In terms of assembly, part of the 30S ribosomal subunit. Contacts proteins S5 and S12.

In terms of biological role, one of the primary rRNA binding proteins, it binds directly to 16S rRNA central domain where it helps coordinate assembly of the platform of the 30S subunit. The polypeptide is Small ribosomal subunit protein uS8 (Mannheimia succiniciproducens (strain KCTC 0769BP / MBEL55E)).